Here is a 336-residue protein sequence, read N- to C-terminus: Biotin synthase (336 aa).

Residues 48-277 enclose the Radical SAM core domain; it reads VFGDEVEFCS…QAELRLCGGR (230 aa). [4Fe-4S] cluster-binding residues include Cys66, Cys70, and Cys73. Residues Cys110, Cys142, Cys202, and Arg272 each coordinate [2Fe-2S] cluster.

It belongs to the radical SAM superfamily. Biotin synthase family. Homodimer. [4Fe-4S] cluster is required as a cofactor. [2Fe-2S] cluster serves as cofactor.

It catalyses the reaction (4R,5S)-dethiobiotin + (sulfur carrier)-SH + 2 reduced [2Fe-2S]-[ferredoxin] + 2 S-adenosyl-L-methionine = (sulfur carrier)-H + biotin + 2 5'-deoxyadenosine + 2 L-methionine + 2 oxidized [2Fe-2S]-[ferredoxin]. It participates in cofactor biosynthesis; biotin biosynthesis; biotin from 7,8-diaminononanoate: step 2/2. Catalyzes the conversion of dethiobiotin (DTB) to biotin by the insertion of a sulfur atom into dethiobiotin via a radical-based mechanism. This Persephonella marina (strain DSM 14350 / EX-H1) protein is Biotin synthase.